The following is a 157-amino-acid chain: Probable succinate transporter subunit YjjB (157 aa).

A run of 4 helical transmembrane segments spans residues 2–22 (GIIS…IPAV), 55–75 (AGFN…SIGI), 87–107 (IFTV…TAMI), and 129–149 (FLKA…PGLW).

It belongs to the ThrE exporter (TC 2.A.79) family. In terms of assembly, the transporter is composed of YjjB and YjjP.

The protein localises to the cell inner membrane. Functionally, involved in succinate export with YjjP. Both proteins are required for export. This chain is Probable succinate transporter subunit YjjB, found in Klebsiella pneumoniae (strain 342).